A 166-amino-acid chain; its full sequence is Cyclic pyranopterin monophosphate synthase (166 aa).

Substrate is bound by residues 75–77 and 113–114; these read LCH and ME. Aspartate 128 is an active-site residue.

This sequence belongs to the MoaC family. In terms of assembly, homohexamer; trimer of dimers.

The catalysed reaction is (8S)-3',8-cyclo-7,8-dihydroguanosine 5'-triphosphate = cyclic pyranopterin phosphate + diphosphate. It functions in the pathway cofactor biosynthesis; molybdopterin biosynthesis. In terms of biological role, catalyzes the conversion of (8S)-3',8-cyclo-7,8-dihydroguanosine 5'-triphosphate to cyclic pyranopterin monophosphate (cPMP). The sequence is that of Cyclic pyranopterin monophosphate synthase from Thermomicrobium roseum (strain ATCC 27502 / DSM 5159 / P-2).